The sequence spans 62 residues: Protein CYSTEINE-RICH TRANSMEMBRANE MODULE 2 (62 aa).

2 helical membrane passes run 23–39 and 33–53; these read VAVA…AAFD and VVAA…LSLI.

It belongs to the CYSTM1 family. As to quaternary structure, heterodimers. Binds weakly to CYSTM7 and WIH1/CYSTM13. Mostly expressed in stems, siliques, leaves and flowers and, to a lower extent, in roots.

It localises to the cell membrane. The protein localises to the nucleus. It is found in the secreted. Its subcellular location is the cell wall. Its function is as follows. Involved in resistance to abiotic stress. Functionally, confers resistance to heavy metal ions (e.g. cadmium (CdCl(2)) and copper (CuCl(2))) by chelating them at the plasma membrane of root cells, thus stopping their entry and reducing their accumulation. The sequence is that of Protein CYSTEINE-RICH TRANSMEMBRANE MODULE 2 from Arabidopsis thaliana (Mouse-ear cress).